The following is a 229-amino-acid chain: Deleted in azoospermia-like (229 aa).

Residues 47-128 (NTLFVGGIDM…PAIMKERSSR (82 aa)) enclose the RRM domain. The 27-residue stretch at 172–198 (PYSYSSPPGIMVPQVPMNYAQTTYAYQ) folds into the DAZ domain.

The protein belongs to the RRM DAZ family. Testis and ovary specific. In ovary, it is localized in the cortex of oocytes. At the onset of embryogenesis, maternal product is located at the vegetal pole, before migrating toward blastomeres through cytoplasmic streams as early embryogenesis proceededs.

It localises to the cytoplasm. Its function is as follows. RNA-binding protein involved in gametogenesis in both males and females. Acts by binding to the 3'-UTR of mRNA, specifically recognizing GUU triplets, and promoting the translation of key transcripts. Establishes oocyte polarity through interaction with Bucky ball (BUC). Interacts with Bucky ball (BUC) mRNA to mediate Balbiani body formation and oocyte polarity during early oogenesis. In Danio rerio (Zebrafish), this protein is Deleted in azoospermia-like (dazl).